The primary structure comprises 836 residues: Zinc fingers and homeoboxes protein 2 (836 aa).

The segment at 24-58 is disordered; it reads LEEADRAKDKGLGVPPSDVSKERWAAEPEPSSKES. An interaction with EFNB1 region spans residues 27-77; sequence ADRAKDKGLGVPPSDVSKERWAAEPEPSSKESEVVEVRSVGESQSKKLQGG. A compositionally biased stretch (basic and acidic residues) spans 42 to 58; that stretch reads VSKERWAAEPEPSSKES. 2 C2H2-type zinc fingers span residues 78–101 and 110–133; these read YECKYCPYSTQNLNEFTEHVDMQH and YVCAECNFTTKKYDSLSDHNSKFH. The disordered stretch occupies residues 168-210; that stretch reads SAPGSSDNDPGVSVGKTATVKTGKQKADAKKVPKKPDEAAPDN. Basic and acidic residues predominate over residues 192-210; it reads QKADAKKVPKKPDEAAPDN. The required for homodimerization stretch occupies residues 195–358; sequence DAKKVPKKPD…PAQLTPTKVS (164 aa). 4 consecutive DNA-binding regions (homeobox) follow at residues 263 to 324, 439 to 501, 530 to 591, and 628 to 690; these read NTTK…WSPE, TPAS…IVHI, AQKF…EQAV, and SPSS…TLSW. Positions 263 to 446 are required for repressor activity; it reads NTTKYNSALD…PLTPASDRKK (184 aa). The segment at 263–497 is required for interaction with NFYA; the sequence is NTTKYNSALD…SDHRYRCQRG (235 aa). The required for nuclear localization stretch occupies residues 317–446; that stretch reads HGISWSPEEV…PLTPASDRKK (130 aa). Residues 404–442 are disordered; that stretch reads GQKRPLVTPQAAPEPKRPHIAQVPEPPPKVANTPLTPAS. A Glycyl lysine isopeptide (Lys-Gly) (interchain with G-Cter in SUMO2) cross-link involves residue lysine 455. 2 stretches are compositionally biased toward basic and acidic residues: residues 700 to 709 and 730 to 746; these read SDDHGHDVAS and YAKDPKALGEEESEKLV. The disordered stretch occupies residues 700 to 836; the sequence is SDDHGHDVAS…DSTPAEAGQA (137 aa). A phosphoserine mark is found at serine 824 and serine 826.

Belongs to the ZHX family. As to quaternary structure, homodimer (via homeobox domain 1). Heterodimer with ZHX1 (via homeobox domain 1). Heterodimer with ZHX3 (via homeobox domain 1). Heterodimerization with ZHX1 is not necessary for repressor activity. Interacts (via homeobox domain) with NFYA (via N-terminus). Interacts with EFNB1 intracellular domain peptide; the interaction enhances ZHX2 transcriptional repression activity.

It localises to the nucleus. Its function is as follows. Acts as a transcriptional repressor. Represses the promoter activity of the CDC25C gene stimulated by NFYA. May play a role in retinal development where it regulates the composition of bipolar cell populations, by promoting differentiation of bipolar OFF-type cells. In the brain, may promote maintenance and suppress differentiation of neural progenitor cells in the developing cortex. In Rattus norvegicus (Rat), this protein is Zinc fingers and homeoboxes protein 2 (Zhx2).